The following is a 129-amino-acid chain: Small ribosomal subunit protein uS9 (129 aa).

Residues 98–129 (KAQGFLTRDPRKKERKKYGRKKARKSFQFSKR) are disordered. A compositionally biased stretch (basic residues) spans 110–129 (KERKKYGRKKARKSFQFSKR).

The protein belongs to the universal ribosomal protein uS9 family.

The sequence is that of Small ribosomal subunit protein uS9 from Chlamydia trachomatis serovar L2 (strain ATCC VR-902B / DSM 19102 / 434/Bu).